The following is a 620-amino-acid chain: Cryptochrome-1 (620 aa).

The Photolyase/cryptochrome alpha/beta domain maps to 3–132 (VNAVHWFRKG…EVIVRISHTL (130 aa)). Short sequence motifs (LIR) lie at residues 50-54 (NRWRF), 82-87 (DVFPRL), and 151-156 (KRFQTL). Ser-252 is an FAD binding site. 4 consecutive short sequence motifs (LIR) follow at residues 255 to 260 (LRFGCL), 271 to 276 (DLYKKV), 285 to 290 (SLYGQL), and 335 to 339 (TGFPW). Gln-289 is a binding site for FAD. Residue His-355 participates in FAD binding. The short motif at 379 to 384 (KVFEEL) is the LIR 8 element. Position 387–389 (387–389 (DAD)) interacts with FAD. 5 short sequence motifs (LIR) span residues 395–400 (GSWMWL), 411–416 (HCYCPV), 430–435 (RRYLPV), 486–491 (QIYQQL), and 492–497 (SRYRGL). The segment at 593-620 (TGISAGKRPNPEEETQSVGPKVQRQSTN) is disordered.

It belongs to the DNA photolyase class-1 family. In terms of assembly, component of the circadian core oscillator, which includes the CRY proteins, CLOCK or NPAS2, BMAL1 or BMAL2, CSNK1E, and the PER proteins. FAD serves as cofactor. The cofactor is (6R)-5,10-methylene-5,6,7,8-tetrahydrofolate. Expressed in the retina.

The protein resides in the cytoplasm. It is found in the nucleus. In terms of biological role, transcriptional repressor which forms a core component of the circadian clock. The circadian clock, an internal time-keeping system, regulates various physiological processes through the generation of approximately 24 hour circadian rhythms in gene expression, which are translated into rhythms in metabolism and behavior. It is derived from the Latin roots 'circa' (about) and 'diem' (day) and acts as an important regulator of a wide array of physiological functions including metabolism, sleep, body temperature, blood pressure, endocrine, immune, cardiovascular, and renal function. Consists of two major components: the central clock, residing in the suprachiasmatic nucleus (SCN) of the brain, and the peripheral clocks that are present in nearly every tissue and organ system. Both the central and peripheral clocks can be reset by environmental cues, also known as Zeitgebers (German for 'timegivers'). The predominant Zeitgeber for the central clock is light, which is sensed by retina and signals directly to the SCN. The central clock entrains the peripheral clocks through neuronal and hormonal signals, body temperature and feeding-related cues, aligning all clocks with the external light/dark cycle. Circadian rhythms allow an organism to achieve temporal homeostasis with its environment at the molecular level by regulating gene expression to create a peak of protein expression once every 24 hours to control when a particular physiological process is most active with respect to the solar day. Transcription and translation of core clock components (CLOCK, NPAS2, BMAL1, BMAL2, PER1, PER2, PER3, CRY1 and CRY2) plays a critical role in rhythm generation, whereas delays imposed by post-translational modifications (PTMs) are important for determining the period (tau) of the rhythms (tau refers to the period of a rhythm and is the length, in time, of one complete cycle). A diurnal rhythm is synchronized with the day/night cycle, while the ultradian and infradian rhythms have a period shorter and longer than 24 hours, respectively. Disruptions in the circadian rhythms contribute to the pathology of cardiovascular diseases, cancer, metabolic syndromes and aging. A transcription/translation feedback loop (TTFL) forms the core of the molecular circadian clock mechanism. Transcription factors, CLOCK or NPAS2 and BMAL1 or BMAL2, form the positive limb of the feedback loop, act in the form of a heterodimer and activate the transcription of core clock genes and clock-controlled genes (involved in key metabolic processes), harboring E-box elements (5'-CACGTG-3') within their promoters. The core clock genes: PER1/2/3 and CRY1/2 which are transcriptional repressors form the negative limb of the feedback loop and interact with the CLOCK|NPAS2-BMAL1|BMAL2 heterodimer inhibiting its activity and thereby negatively regulating their own expression. This heterodimer also activates nuclear receptors NR1D1/2 and RORA/B/G, which form a second feedback loop and which activate and repress BMAL1 transcription, respectively. CRY1 and CRY2 have redundant functions but also differential and selective contributions at least in defining the pace of the SCN circadian clock and its circadian transcriptional outputs. More potent transcriptional repressor in cerebellum and liver than CRY2, though more effective in lengthening the period of the SCN oscillator. On its side, CRY2 seems to play a critical role in tuning SCN circadian period by opposing the action of CRY1. With CRY2, is dispensable for circadian rhythm generation but necessary for the development of intercellular networks for rhythm synchrony. Capable of translocating circadian clock core proteins such as PER proteins to the nucleus. Interacts with CLOCK-BMAL1 independently of PER proteins and is found at CLOCK-BMAL1-bound sites, suggesting that CRY may act as a molecular gatekeeper to maintain CLOCK-BMAL1 in a poised and repressed state until the proper time for transcriptional activation. This chain is Cryptochrome-1 (CRY1), found in Erithacus rubecula (European robin).